A 212-amino-acid chain; its full sequence is Transcription factor MYB8 (212 aa).

HTH myb-type domains lie at 9–61 and 62–116; these read KAHM…INYL and RPDL…KRKL. 2 consecutive DNA-binding regions (H-T-H motif) follow at residues 37 to 61 and 89 to 112; these read WRSL…INYL and WSLI…NTHI.

The protein localises to the nucleus. In terms of biological role, transcription activator. The protein is Transcription factor MYB8 of Arabidopsis thaliana (Mouse-ear cress).